The following is a 174-amino-acid chain: Methionine-R-sulfoxide reductase B2, mitochondrial (174 aa).

Residues 1–61 (MARLLRALRG…PEQFYVTREK (61 aa)) constitute a mitochondrion transit peptide. Residues 62–172 (GTEAPFSGMY…NSVALKFKPS (111 aa)) form the MsrB domain. Cys-82, Cys-85, Cys-138, and Cys-141 together coordinate Zn(2+). Catalysis depends on Cys-161, which acts as the Nucleophile.

The protein belongs to the MsrB Met sulfoxide reductase family. The cofactor is Zn(2+).

The protein resides in the mitochondrion. The catalysed reaction is L-methionyl-[protein] + [thioredoxin]-disulfide + H2O = L-methionyl-(R)-S-oxide-[protein] + [thioredoxin]-dithiol. It catalyses the reaction [thioredoxin]-disulfide + L-methionine + H2O = L-methionine (R)-S-oxide + [thioredoxin]-dithiol. Functionally, methionine-sulfoxide reductase that specifically reduces methionine (R)-sulfoxide back to methionine. While in many cases, methionine oxidation is the result of random oxidation following oxidative stress, methionine oxidation is also a post-translational modification that takes place on specific residue. Upon oxidative stress, may play a role in the preservation of mitochondrial integrity by decreasing the intracellular reactive oxygen species build-up through its scavenging role, hence contributing to cell survival and protein maintenance. The chain is Methionine-R-sulfoxide reductase B2, mitochondrial (Msrb2) from Rattus norvegicus (Rat).